The chain runs to 74 residues: SPbeta prophage-derived uncharacterized HTH-type transcriptional regulator YopS (74 aa).

The 56-residue stretch at Ile11–Leu66 folds into the HTH cro/C1-type domain. A DNA-binding region (H-T-H motif) is located at residues Ile22 to Arg41.

The chain is SPbeta prophage-derived uncharacterized HTH-type transcriptional regulator YopS (yopS) from Bacillus subtilis (strain 168).